The following is a 152-amino-acid chain: Transcriptional repressor NrdR (152 aa).

A zinc finger lies at 3–34 (CPYCQHPDSDVIDTRKLHNGETIRRRRKCEAC). Residues 49 to 139 (ITVVKKNGER…VYRSFADIGK (91 aa)) form the ATP-cone domain.

The protein belongs to the NrdR family. It depends on Zn(2+) as a cofactor.

Functionally, negatively regulates transcription of bacterial ribonucleotide reductase nrd genes and operons by binding to NrdR-boxes. This chain is Transcriptional repressor NrdR, found in Roseiflexus castenholzii (strain DSM 13941 / HLO8).